Consider the following 647-residue polypeptide: DNA mismatch repair protein MutL (647 aa).

This sequence belongs to the DNA mismatch repair MutL/HexB family.

This protein is involved in the repair of mismatches in DNA. It is required for dam-dependent methyl-directed DNA mismatch repair. May act as a 'molecular matchmaker', a protein that promotes the formation of a stable complex between two or more DNA-binding proteins in an ATP-dependent manner without itself being part of a final effector complex. This Bacillus thuringiensis (strain Al Hakam) protein is DNA mismatch repair protein MutL.